The chain runs to 607 residues: Discoidin-inducing complex subunit B (607 aa).

The first 19 residues, 1–19 (MNKKIIILIYLIFIKSIVG), serve as a signal peptide directing secretion. Over 20-554 (QNPVWIGGSG…LGTDGISKGS (535 aa)) the chain is Extracellular. N-linked (GlcNAc...) asparagine glycans are attached at residues N75, N161, N215, N276, N277, N307, N324, N453, N477, and N527. Residues 555-575 (LAGISVSMVALACFVSLGVWW) traverse the membrane as a helical segment. Topologically, residues 576–607 (KTSKKNDQRNDSQVLTNFSQNKSDDIDVERKL) are cytoplasmic.

As to quaternary structure, forms a complex with psiF/dicA.

The protein resides in the membrane. The protein localises to the secreted. Its function is as follows. Component of a complex that acts as a quorum sensing protein regulating discoidin gene expression during growth and development. Its function in the complex is unclear as it has no ability to induce discoidin during growth and development by itself. This chain is Discoidin-inducing complex subunit B (dicB), found in Dictyostelium discoideum (Social amoeba).